We begin with the raw amino-acid sequence, 305 residues long: uncharacterized protein (305 aa).

Helical transmembrane passes span 52 to 72, 89 to 109, and 120 to 140; these read TINL…SKII, IAGF…FIAA, and VIAI…GSLS.

This sequence belongs to the MscS (TC 1.A.23) family.

It is found in the cell membrane. This is an uncharacterized protein from Buchnera aphidicola subsp. Acyrthosiphon pisum (strain APS) (Acyrthosiphon pisum symbiotic bacterium).